Here is a 427-residue protein sequence, read N- to C-terminus: Serine hydroxymethyltransferase (427 aa).

(6S)-5,6,7,8-tetrahydrofolate-binding positions include leucine 118 and 122–124 (GHL). Position 227 is an N6-(pyridoxal phosphate)lysine (lysine 227). 351–353 (SPF) lines the (6S)-5,6,7,8-tetrahydrofolate pocket.

The protein belongs to the SHMT family. In terms of assembly, homodimer. Pyridoxal 5'-phosphate is required as a cofactor.

It is found in the cytoplasm. The enzyme catalyses (6R)-5,10-methylene-5,6,7,8-tetrahydrofolate + glycine + H2O = (6S)-5,6,7,8-tetrahydrofolate + L-serine. It participates in one-carbon metabolism; tetrahydrofolate interconversion. The protein operates within amino-acid biosynthesis; glycine biosynthesis; glycine from L-serine: step 1/1. Catalyzes the reversible interconversion of serine and glycine with tetrahydrofolate (THF) serving as the one-carbon carrier. This reaction serves as the major source of one-carbon groups required for the biosynthesis of purines, thymidylate, methionine, and other important biomolecules. Also exhibits THF-independent aldolase activity toward beta-hydroxyamino acids, producing glycine and aldehydes, via a retro-aldol mechanism. This is Serine hydroxymethyltransferase from Thermotoga petrophila (strain ATCC BAA-488 / DSM 13995 / JCM 10881 / RKU-1).